Here is a 1019-residue protein sequence, read N- to C-terminus: Pleckstrin homology domain-containing family M member 2 (1019 aa).

Residue methionine 1 is modified to N-acetylmethionine. Residues methionine 1 to leucine 310 form an interaction with KIF5B region. Positions arginine 36 to proline 158 constitute an RUN domain. Disordered stretches follow at residues serine 230 to leucine 458, serine 471 to glutamine 525, and glutamine 557 to valine 581. Polar residues-rich tracts occupy residues aspartate 243–phenylalanine 272 and threonine 279–threonine 291. A compositionally biased stretch (basic residues) spans valine 315 to serine 327. The segment covering leucine 417–cysteine 427 has biased composition (polar residues). Serine 441 carries the phosphoserine modification. The segment covering proline 516–glutamine 525 has biased composition (basic and acidic residues). Positions proline 762–proline 885 are interaction with sifA. In terms of domain architecture, PH spans threonine 771–serine 873.

As to quaternary structure, interacts with KLC2 (via TPR repeats). Interacts with KIF5B. Interacts with BORCS5. Interacts (via RUN domain) with ARL8B (GTP-bound form); PLEKHM1 and PLEKHM2 compete for interaction with ARL8B. Interacts with ARL8A. In terms of assembly, (Microbial infection) Interacts with the S.typhimurium sifA protein; required for S.typhimurium infection.

Its subcellular location is the cytoplasm. It localises to the lysosome membrane. Functionally, plays a role in lysosomes movement and localization at the cell periphery acting as an effector of ARL8B. Required for ARL8B to exert its effects on lysosome location, recruits kinesin-1 to lysosomes and hence direct their movement toward microtubule plus ends. Binding to ARL8B provides a link from lysosomal membranes to plus-end-directed motility. Critical factor involved in NK cell-mediated cytotoxicity. Drives the polarization of cytolytic granules and microtubule-organizing centers (MTOCs) toward the immune synapse between effector NK lymphocytes and target cells. Required for maintenance of the Golgi apparatus organization. May play a role in membrane tubulation. In Homo sapiens (Human), this protein is Pleckstrin homology domain-containing family M member 2.